Here is a 550-residue protein sequence, read N- to C-terminus: GMP synthase [glutamine-hydrolyzing] (550 aa).

One can recognise a Glutamine amidotransferase type-1 domain in the interval R39–L232. The active-site Nucleophile is the C116. Catalysis depends on residues H206 and E208. One can recognise a GMPS ATP-PPase domain in the interval W233–R425. S260–S266 contributes to the ATP binding site.

Homodimer.

The catalysed reaction is XMP + L-glutamine + ATP + H2O = GMP + L-glutamate + AMP + diphosphate + 2 H(+). Its pathway is purine metabolism; GMP biosynthesis; GMP from XMP (L-Gln route): step 1/1. Functionally, catalyzes the synthesis of GMP from XMP. This is GMP synthase [glutamine-hydrolyzing] from Acinetobacter baylyi (strain ATCC 33305 / BD413 / ADP1).